The primary structure comprises 303 residues: tRNA-cytidine(32) 2-sulfurtransferase (303 aa).

The short motif at 45–50 (SGGKDS) is the PP-loop motif element. Positions 120, 123, and 211 each coordinate [4Fe-4S] cluster.

Belongs to the TtcA family. In terms of assembly, homodimer. Requires Mg(2+) as cofactor. [4Fe-4S] cluster is required as a cofactor.

It is found in the cytoplasm. The catalysed reaction is cytidine(32) in tRNA + S-sulfanyl-L-cysteinyl-[cysteine desulfurase] + AH2 + ATP = 2-thiocytidine(32) in tRNA + L-cysteinyl-[cysteine desulfurase] + A + AMP + diphosphate + H(+). It functions in the pathway tRNA modification. Its function is as follows. Catalyzes the ATP-dependent 2-thiolation of cytidine in position 32 of tRNA, to form 2-thiocytidine (s(2)C32). The sulfur atoms are provided by the cysteine/cysteine desulfurase (IscS) system. The chain is tRNA-cytidine(32) 2-sulfurtransferase from Methylobacillus flagellatus (strain ATCC 51484 / DSM 6875 / VKM B-1610 / KT).